A 719-amino-acid polypeptide reads, in one-letter code: Plasmin and fibronectin-binding protein A (719 aa).

The signal sequence occupies residues 1 to 45 (MLKIVKKLEVLMKYFVPNEVFSIRKLKVGTCSVLLAISILGSQGI). Disordered regions lie at residues 56–76 (PMATKESSNAITNDLDNSPTV) and 109–128 (IRSNSQLDNRTVESTVTSTN). PbH1 repeat units lie at residues 287-310 (SNNVTIKNVTFKDSYQGHAIQIAG), 362-384 (SENVTIQNSYFGKSDKSGELVTA), 397-419 (PSNIKILNNHFDNMMYAGVRFTG), 497-523 (VSDITVTKNVINNNSKETEQPNIELLR), and 525-546 (SDNLVVSENSIFGGKEGIVIED). Residues 601–658 (NNLSDKNEKEKNKEEKQSNSNNVIDSNQKNGEFNSSKDNRQMNDKIDNKQDNKTEEVN) adopt a coiled-coil conformation. A compositionally biased stretch (basic and acidic residues) spans 606 to 617 (KNEKEKNKEEKQ). The segment at 606 to 655 (KNEKEKNKEEKQSNSNNVIDSNQKNGEFNSSKDNRQMNDKIDNKQDNKTE) is disordered. Over residues 623-634 (VIDSNQKNGEFN) the composition is skewed to polar residues. The segment covering 635 to 655 (SSKDNRQMNDKIDNKQDNKTE) has biased composition (basic and acidic residues). The LPXTG sorting signal motif lies at 685–689 (LPKTG). Pentaglycyl murein peptidoglycan amidated threonine is present on threonine 688. Positions 689-719 (GSNKIMELFLTVTGIGLLLTLKGLKYYGKDK) are cleaved as a propeptide — removed by sortase.

It is found in the secreted. The protein localises to the cell wall. Its function is as follows. Acts as a fibronectin-dependent adhesin and invasin. Binds host (in this case human) fibronectin, plasmin, plasminogen, and human serum albumin. Where the bacteria adhere to human cells there is major recruitment of microvilli which seem to fuse to cover the streptococcal chains. Antibodies to this protein reduce bacterial growth in human blood. The chain is Plasmin and fibronectin-binding protein A (pfbA) from Streptococcus pneumoniae (strain ATCC BAA-255 / R6).